The chain runs to 211 residues: Imidazole glycerol phosphate synthase subunit HisH (211 aa).

A Glutamine amidotransferase type-1 domain is found at 3–211 (VIAVIDYDMG…VSQIKAPVLV (209 aa)). Catalysis depends on Cys-81, which acts as the Nucleophile. Catalysis depends on residues His-186 and Glu-188.

As to quaternary structure, heterodimer of HisH and HisF.

The protein resides in the cytoplasm. It carries out the reaction 5-[(5-phospho-1-deoxy-D-ribulos-1-ylimino)methylamino]-1-(5-phospho-beta-D-ribosyl)imidazole-4-carboxamide + L-glutamine = D-erythro-1-(imidazol-4-yl)glycerol 3-phosphate + 5-amino-1-(5-phospho-beta-D-ribosyl)imidazole-4-carboxamide + L-glutamate + H(+). It catalyses the reaction L-glutamine + H2O = L-glutamate + NH4(+). Its pathway is amino-acid biosynthesis; L-histidine biosynthesis; L-histidine from 5-phospho-alpha-D-ribose 1-diphosphate: step 5/9. IGPS catalyzes the conversion of PRFAR and glutamine to IGP, AICAR and glutamate. The HisH subunit catalyzes the hydrolysis of glutamine to glutamate and ammonia as part of the synthesis of IGP and AICAR. The resulting ammonia molecule is channeled to the active site of HisF. The sequence is that of Imidazole glycerol phosphate synthase subunit HisH from Cyanothece sp. (strain PCC 7425 / ATCC 29141).